The chain runs to 1221 residues: DNA-directed RNA polymerase subunit beta' (1221 aa).

Zn(2+)-binding residues include Cys60, Cys62, Cys75, and Cys78. 3 residues coordinate Mg(2+): Asp449, Asp451, and Asp453. Zn(2+)-binding residues include Cys820, Cys894, Cys901, and Cys904.

This sequence belongs to the RNA polymerase beta' chain family. The RNAP catalytic core consists of 2 alpha, 1 beta, 1 beta' and 1 omega subunit. When a sigma factor is associated with the core the holoenzyme is formed, which can initiate transcription. Mg(2+) is required as a cofactor. Requires Zn(2+) as cofactor.

It catalyses the reaction RNA(n) + a ribonucleoside 5'-triphosphate = RNA(n+1) + diphosphate. DNA-dependent RNA polymerase catalyzes the transcription of DNA into RNA using the four ribonucleoside triphosphates as substrates. This Ligilactobacillus salivarius (strain UCC118) (Lactobacillus salivarius) protein is DNA-directed RNA polymerase subunit beta'.